The chain runs to 645 residues: Putative galactocerebrosidase (645 aa).

The N-terminal stretch at M1–A16 is a signal peptide. T87 and W128 together coordinate substrate. N141 is a glycosylation site (N-linked (GlcNAc...) asparagine). N171 is a binding site for substrate. Catalysis depends on E172, which acts as the Proton donor/acceptor. N-linked (GlcNAc...) asparagine glycans are attached at residues N174 and N193. E248 acts as the Nucleophile in catalysis. Cysteines 261 and 365 form a disulfide. Residues N274, N395, N411, N532, N616, N620, and N638 are each glycosylated (N-linked (GlcNAc...) asparagine).

Belongs to the glycosyl hydrolase 59 family.

It catalyses the reaction a beta-D-Gal-(1&lt;-&gt;1')-ceramide + H2O = an N-acyl-sphingoid base + D-galactose. The enzyme catalyses a beta-D-galactosyl-(1&lt;-&gt;1')-N-acylsphing-4-enine + H2O = an N-acylsphing-4-enine + D-galactose. Its function is as follows. Hydrolyzes the galactose ester bonds of galactosylceramide, galactosylsphingoid base, lactosylceramide, and monogalactosyldiglyceride. C.elegans contain specific sphingoid bases, which are unique or different in structure compared to the sphingoid bases found in other animals. Two examples of these distinctive compounds are: 15-methylhexadecasphinganine and 15-methylhexadecasphing-4-enine. This chain is Putative galactocerebrosidase, found in Caenorhabditis elegans.